The following is a 460-amino-acid chain: CWF19-like protein 2 homolog (460 aa).

Disordered regions lie at residues 38-78 (GKTF…EDEK), 103-175 (KLES…TGTA), and 193-227 (RRHDDESVDDIAEMQKGKKKSDEKDKKRKEKESIK). The span at 54–68 (GSQQVRNDVMKSSDS) shows a compositional bias: polar residues. The stretch at 84 to 106 (KILKAEMKGDTDLVKKLKRKLES) forms a coiled coil. 3 stretches are compositionally biased toward basic and acidic residues: residues 113–131 (EPPKSKSKEVTMMRRDREG), 139–172 (RRSDSDRHGEGSSRMRREYEKSQDLDSMVREEKT), and 205–227 (EMQKGKKKSDEKDKKRKEKESIK). The stretch at 210–231 (KKKSDEKDKKRKEKESIKEHKR) forms a coiled coil.

The protein belongs to the CWF19 family.

The sequence is that of CWF19-like protein 2 homolog from Caenorhabditis elegans.